A 1160-amino-acid polypeptide reads, in one-letter code: DNA polymerase III subunit alpha (1160 aa).

The protein belongs to the DNA polymerase type-C family. DnaE subfamily. As to quaternary structure, the DNA polymerase III holoenzyme complex contains at least 10 different subunits organized into 3 functionally essential subassemblies: the Pol III core, the beta sliding clamp processivity factor and the clamp-loading complex. The Pol III core (subunits alpha, epsilon and theta) contains the polymerase and the 3'-5' exonuclease proofreading activities. The polymerase is tethered to the template via the dimeric beta sliding clamp processivity factor. The clamp loader (also called gamma complex) assembles the beta sliding clamp onto the primed template and plays a central role in the organization and communication at the replication fork. The clamp-loading complex contains delta, delta', psi and chi, and 3 copies of either or both of two different DnaX proteins, gamma and tau. The DNA replisome complex has a single clamp loader (3 tau and 1 each of delta, delta', psi and chi subunits) which binds 3 Pol III cores (1 core on the leading strand and 2 on the lagging strand) each with a beta sliding clamp dimer. Additional proteins in the replisome are other copies of gamma, psi and chi, Ssb, DNA helicase and RNA primase. Interacts with the beta sliding-clamp subunit via the peptide Gln-Ala-Asp-Met-Phe (residues 920-924).

It localises to the cytoplasm. The enzyme catalyses DNA(n) + a 2'-deoxyribonucleoside 5'-triphosphate = DNA(n+1) + diphosphate. In terms of biological role, DNA polymerase III is a complex, multichain enzyme responsible for most of the replicative synthesis in bacteria. This DNA polymerase also exhibits 3' to 5' exonuclease activity. The alpha chain is the DNA polymerase catalytic subunit. It is tethered to replicating DNA by the beta sliding clamp (dnaN), which confers extremely high processivity to the catalytic subunit, copying a 5.4 kb genome in 11 seconds, a speed of at least 500 nucleotides/second at 30 degrees Celsius. In Escherichia coli (strain K12), this protein is DNA polymerase III subunit alpha (dnaE).